Here is a 123-residue protein sequence, read N- to C-terminus: Small ribosomal subunit protein uS12 (123 aa).

Aspartate 89 is subject to 3-methylthioaspartic acid.

Belongs to the universal ribosomal protein uS12 family. As to quaternary structure, part of the 30S ribosomal subunit. Contacts proteins S8 and S17. May interact with IF1 in the 30S initiation complex.

Its function is as follows. With S4 and S5 plays an important role in translational accuracy. Functionally, interacts with and stabilizes bases of the 16S rRNA that are involved in tRNA selection in the A site and with the mRNA backbone. Located at the interface of the 30S and 50S subunits, it traverses the body of the 30S subunit contacting proteins on the other side and probably holding the rRNA structure together. The combined cluster of proteins S8, S12 and S17 appears to hold together the shoulder and platform of the 30S subunit. This Citrifermentans bemidjiense (strain ATCC BAA-1014 / DSM 16622 / JCM 12645 / Bem) (Geobacter bemidjiensis) protein is Small ribosomal subunit protein uS12.